Reading from the N-terminus, the 827-residue chain is Glycerol-3-phosphate acyltransferase (827 aa).

The HXXXXD motif motif lies at 325–330 (CHRSHM).

This sequence belongs to the GPAT/DAPAT family.

Its subcellular location is the cell inner membrane. The catalysed reaction is sn-glycerol 3-phosphate + an acyl-CoA = a 1-acyl-sn-glycero-3-phosphate + CoA. Its pathway is phospholipid metabolism; CDP-diacylglycerol biosynthesis; CDP-diacylglycerol from sn-glycerol 3-phosphate: step 1/3. In Escherichia coli (strain SMS-3-5 / SECEC), this protein is Glycerol-3-phosphate acyltransferase.